The primary structure comprises 218 residues: CTP-dependent diacylglycerol kinase 1 (218 aa).

The Lumenal portion of the chain corresponds to 1–19 (MSTKLTWSQWSKKHEIPRK). A helical membrane pass occupies residues 20 to 37 (ALHTSIGFFALLLQGCGY). A topological domain (cytoplasmic) is located at residue His38. The chain crosses the membrane as a helical span at residues 39 to 59 (AAQIIPVIEIGFIPAFTGDVI). Residues 60 to 88 (RFNWPAFSRLYNRVIGPLMRESEKNAWNG) lie on the Lumenal side of the membrane. Residues 89 to 109 (VIFYMIGVWIVLKVFPEEIAV) traverse the membrane as a helical segment. Over 110 to 142 (MSVLLLSWCDTTASTVGRKWGKYTPKIAKNKSL) the chain is Cytoplasmic. A helical membrane pass occupies residues 143–163 (AGSLGAFVCGVFCCYVYWGLF). Topologically, residues 164-179 (RTGPDSLAAQSRIPFP) are lumenal. The next 2 membrane-spanning stretches (helical) occupy residues 180–200 (WLCLINGFIGAFAEAMDVWGL) and 201–217 (DDNLVIPVVSACLLYLI). Position 218 (Met218) is a topological domain, lumenal.

Belongs to the DGK1 family. Ca(2+) is required as a cofactor. Mg(2+) serves as cofactor.

The protein localises to the endoplasmic reticulum membrane. It localises to the nucleus membrane. The enzyme catalyses a 1,2-diacyl-sn-glycerol + CTP = a 1,2-diacyl-sn-glycero-3-phosphate + CDP + H(+). CTP-dependent diacylglycerol kinase that catalyzes the phosphorylation of diacylglycerol (DAG) to phosphatidate (PA). Controls phosphatidate levels at the nuclear envelope. Counteracts the activity of PA phosphatase ned1. May be involved in vesicle trafficking between the endoplasmic reticulum and the Golgi apparatus. Involved in pre-tRNA splicing. In Schizosaccharomyces pombe (strain 972 / ATCC 24843) (Fission yeast), this protein is CTP-dependent diacylglycerol kinase 1 (ptp4).